Here is a 343-residue protein sequence, read N- to C-terminus: Glycogen biosynthesis protein GlgD (343 aa).

The protein belongs to the bacterial/plant glucose-1-phosphate adenylyltransferase family.

In terms of biological role, required for the synthesis of glycogen. The chain is Glycogen biosynthesis protein GlgD (glgD) from Geobacillus stearothermophilus (Bacillus stearothermophilus).